We begin with the raw amino-acid sequence, 1103 residues long: Kinesin-like protein KIF1C (1103 aa).

The Kinesin motor domain maps to 5-348 (SVKVAVRVRP…LRYADRTKQI (344 aa)). Residue 97 to 104 (GQTGAGKS) coordinates ATP. Serine 295 is modified (phosphoserine). Coiled coils occupy residues 359–388 (NARL…SALE) and 438–479 (EEAM…LAEM). The disordered stretch occupies residues 400–438 (ALPAVSSPPAPVSPSSPTTHNGELEPSFSPNTESQIGPE). The residue at position 494 (serine 494) is a Phosphoserine. Residues 523-590 (TRVGQVDMDI…LKSGNRIVMG (68 aa)) form the FHA domain. Residues 633–674 (EQQGIDIKLEMEKRLQDLENQYRKEKEEADLLLEQQRLYADS) are a coiled coil. 2 positions are modified to phosphoserine: serine 674 and serine 676. Disordered regions lie at residues 808-828 (GEEE…ARGA), 874-924 (LAQD…WERV), and 950-1103 (QGLQ…GAAV). The span at 813 to 822 (GGAGSGGGSE) shows a compositional bias: gly residues. The stretch at 828 to 872 (AEVEDLRAHIDKLTGILQEVKLQNSSKDRELQALRDRMLRMERVI) forms a coiled coil. Positions 893 to 910 (PEGSEAAEEAAPSDRMPS) are enriched in low complexity. Serine 915 carries the post-translational modification Phosphoserine. Residues 953–962 (QGSGGRGGGL) are compositionally biased toward gly residues. The segment covering 1021–1031 (PSPRRSHHPRR) has biased composition (basic residues). Serine 1033 is modified (phosphoserine). Omega-N-methylarginine is present on arginine 1041. A compositionally biased stretch (pro residues) spans 1062–1083 (PQPPQPYPAQRPPGPRYPPYTT). A Phosphothreonine modification is found at threonine 1083. Serine 1092 carries the post-translational modification Phosphoserine. Over residues 1092-1103 (SAPDLKESGAAV) the composition is skewed to basic and acidic residues.

The protein belongs to the TRAFAC class myosin-kinesin ATPase superfamily. Kinesin family. Unc-104 subfamily. Monomer. Interacts with BICD2. Post-translationally, phosphorylated on tyrosine residues. As to expression, expressed in all tissues examined, with most abundant expression in heart and skeletal muscle.

It is found in the cytoplasm. Its subcellular location is the cytoskeleton. Motor required for the retrograde transport of Golgi vesicles to the endoplasmic reticulum. Has a microtubule plus end-directed motility. The chain is Kinesin-like protein KIF1C (KIF1C) from Homo sapiens (Human).